The following is a 452-amino-acid chain: Bifunctional protein GlmU (452 aa).

A pyrophosphorylase region spans residues 1 to 232; sequence MTGRSCLTIV…EDEVRGINTK (232 aa). UDP-N-acetyl-alpha-D-glucosamine contacts are provided by residues 11-14, lysine 25, glutamine 78, and 83-84; these read LAAG and GT. Position 108 (aspartate 108) interacts with Mg(2+). The UDP-N-acetyl-alpha-D-glucosamine site is built by glycine 144, glutamate 158, asparagine 173, and asparagine 230. A Mg(2+)-binding site is contributed by asparagine 230. A linker region spans residues 233–253; the sequence is AQLAEAEQVMQARLRKEALDA. The segment at 254–452 is N-acetyltransferase; the sequence is GVTMVAPDTV…KLLAKKPKTG (199 aa). The UDP-N-acetyl-alpha-D-glucosamine site is built by arginine 319 and lysine 337. The active-site Proton acceptor is histidine 349. UDP-N-acetyl-alpha-D-glucosamine contacts are provided by tyrosine 352 and asparagine 363. Acetyl-CoA contacts are provided by residues alanine 366, 372–373, serine 391, serine 409, and arginine 426; that span reads NY.

This sequence in the N-terminal section; belongs to the N-acetylglucosamine-1-phosphate uridyltransferase family. It in the C-terminal section; belongs to the transferase hexapeptide repeat family. As to quaternary structure, homotrimer. The cofactor is Mg(2+).

It localises to the cytoplasm. It carries out the reaction alpha-D-glucosamine 1-phosphate + acetyl-CoA = N-acetyl-alpha-D-glucosamine 1-phosphate + CoA + H(+). It catalyses the reaction N-acetyl-alpha-D-glucosamine 1-phosphate + UTP + H(+) = UDP-N-acetyl-alpha-D-glucosamine + diphosphate. It functions in the pathway nucleotide-sugar biosynthesis; UDP-N-acetyl-alpha-D-glucosamine biosynthesis; N-acetyl-alpha-D-glucosamine 1-phosphate from alpha-D-glucosamine 6-phosphate (route II): step 2/2. It participates in nucleotide-sugar biosynthesis; UDP-N-acetyl-alpha-D-glucosamine biosynthesis; UDP-N-acetyl-alpha-D-glucosamine from N-acetyl-alpha-D-glucosamine 1-phosphate: step 1/1. Its pathway is bacterial outer membrane biogenesis; LPS lipid A biosynthesis. In terms of biological role, catalyzes the last two sequential reactions in the de novo biosynthetic pathway for UDP-N-acetylglucosamine (UDP-GlcNAc). The C-terminal domain catalyzes the transfer of acetyl group from acetyl coenzyme A to glucosamine-1-phosphate (GlcN-1-P) to produce N-acetylglucosamine-1-phosphate (GlcNAc-1-P), which is converted into UDP-GlcNAc by the transfer of uridine 5-monophosphate (from uridine 5-triphosphate), a reaction catalyzed by the N-terminal domain. The polypeptide is Bifunctional protein GlmU (Nitrobacter hamburgensis (strain DSM 10229 / NCIMB 13809 / X14)).